The following is a 292-amino-acid chain: MRRSPDLPYIILFLIPALILIGIFVYFAVVWNIYISFTDWRGLIPSYHFVGLAQYKQLIHDPIFWTSLRNNLLLILLFVPGSLLLGLFLAILLDMKVRFESGFRTIYVLPFALSFVVTATLWAWMYDPSSGVLNVLFDKLGLDFLKSGWITDPKIAMYCIIIALIWQFSGYTMIIYLAGIRSIPIEQYEGALIDGASTWQLYRYIVIPQLTKPTLSAFVVLMVFSLKAFDFIWVLTRGGPGTSTFILAIEMYKETFAKTNFAYGAAIATILLLMALVVVLPYLYWSYKGEER.

A run of 6 helical transmembrane segments spans residues I10–V30, L72–L92, I106–Y126, I160–I180, L215–L235, and F261–P281. Residues L68 to Y284 form the ABC transmembrane type-1 domain.

Belongs to the binding-protein-dependent transport system permease family. MalFG subfamily.

The protein resides in the cell membrane. In terms of biological role, probably part of a binding-protein-dependent transport system PH1214/15/16. Probably responsible for the translocation of the substrate across the membrane. This is Probable ABC transporter permease protein PH1215 from Pyrococcus horikoshii (strain ATCC 700860 / DSM 12428 / JCM 9974 / NBRC 100139 / OT-3).